Reading from the N-terminus, the 400-residue chain is Phosphoglycerate kinase (400 aa).

Residues 23–25 (DLN), Arg-38, 61–64 (HFGR), Arg-120, and Arg-153 each bind substrate. Residues Lys-203, Glu-325, and 355 to 358 (GGDT) contribute to the ATP site.

This sequence belongs to the phosphoglycerate kinase family. Monomer.

The protein localises to the cytoplasm. It catalyses the reaction (2R)-3-phosphoglycerate + ATP = (2R)-3-phospho-glyceroyl phosphate + ADP. It participates in carbohydrate degradation; glycolysis; pyruvate from D-glyceraldehyde 3-phosphate: step 2/5. In Allorhizobium ampelinum (strain ATCC BAA-846 / DSM 112012 / S4) (Agrobacterium vitis (strain S4)), this protein is Phosphoglycerate kinase.